We begin with the raw amino-acid sequence, 138 residues long: Basic phospholipase A2 homolog G6K49 (138 aa).

The N-terminal stretch at 1-16 (MRTLWIMAVLLLGVEG) is a signal peptide. 7 disulfide bridges follow: cysteine 42–cysteine 132, cysteine 44–cysteine 60, cysteine 59–cysteine 112, cysteine 65–cysteine 138, cysteine 66–cysteine 105, cysteine 73–cysteine 98, and cysteine 91–cysteine 103. Positions 122–133 (KKHRVTVKFLCK) are important for membrane-damaging activities in eukaryotes and bacteria; heparin-binding.

Belongs to the phospholipase A2 family. Group II subfamily. K49 sub-subfamily. Homodimer; non-covalently linked. Expressed by the venom gland.

Its subcellular location is the secreted. Its function is as follows. Snake venom phospholipase A2 (PLA2) that lacks enzymatic activity. Displays myotoxic activities. A model of myotoxic mechanism has been proposed: an apo Lys49-PLA2 is activated by the entrance of a hydrophobic molecule (e.g. fatty acid) at the hydrophobic channel of the protein leading to a reorientation of a monomer. This reorientation causes a transition between 'inactive' to 'active' states, causing alignment of C-terminal and membrane-docking sites (MDoS) side-by-side and putting the membrane-disruption sites (MDiS) in the same plane, exposed to solvent and in a symmetric position for both monomers. The MDoS region stabilizes the toxin on membrane by the interaction of charged residues with phospholipid head groups. Subsequently, the MDiS region destabilizes the membrane with penetration of hydrophobic residues. This insertion causes a disorganization of the membrane, allowing an uncontrolled influx of ions (i.e. calcium and sodium), and eventually triggering irreversible intracellular alterations and cell death. The chain is Basic phospholipase A2 homolog G6K49 from Calloselasma rhodostoma (Malayan pit viper).